Here is a 420-residue protein sequence, read N- to C-terminus: Serine hydroxymethyltransferase (420 aa).

(6S)-5,6,7,8-tetrahydrofolate contacts are provided by residues Leu118 and 122-124 (GHL). Position 227 is an N6-(pyridoxal phosphate)lysine (Lys227).

This sequence belongs to the SHMT family. In terms of assembly, homodimer. The cofactor is pyridoxal 5'-phosphate.

The protein localises to the cytoplasm. It carries out the reaction (6R)-5,10-methylene-5,6,7,8-tetrahydrofolate + glycine + H2O = (6S)-5,6,7,8-tetrahydrofolate + L-serine. It participates in one-carbon metabolism; tetrahydrofolate interconversion. It functions in the pathway amino-acid biosynthesis; glycine biosynthesis; glycine from L-serine: step 1/1. Catalyzes the reversible interconversion of serine and glycine with tetrahydrofolate (THF) serving as the one-carbon carrier. This reaction serves as the major source of one-carbon groups required for the biosynthesis of purines, thymidylate, methionine, and other important biomolecules. Also exhibits THF-independent aldolase activity toward beta-hydroxyamino acids, producing glycine and aldehydes, via a retro-aldol mechanism. The chain is Serine hydroxymethyltransferase from Persephonella marina (strain DSM 14350 / EX-H1).